Consider the following 346-residue polypeptide: Selenide, water dikinase (346 aa).

Residue Cys15 is part of the active site. Residues Lys18 and 46–48 (SKD) contribute to the ATP site. Asp49 is a Mg(2+) binding site. ATP contacts are provided by residues Asp66, Asp89, and 137-139 (GHS). Asp89 contributes to the Mg(2+) binding site. A Mg(2+)-binding site is contributed by Asp225.

The protein belongs to the selenophosphate synthase 1 family. Class I subfamily. Homodimer. Mg(2+) serves as cofactor.

It carries out the reaction hydrogenselenide + ATP + H2O = selenophosphate + AMP + phosphate + 2 H(+). Synthesizes selenophosphate from selenide and ATP. This Photobacterium profundum (strain SS9) protein is Selenide, water dikinase.